Here is a 1094-residue protein sequence, read N- to C-terminus: Protein phosphatase 2C and cyclic nucleotide-binding/kinase domain-containing protein (1094 aa).

The 291-residue stretch at 107-397 (RCSFLSQRGY…DDITIIVVHI (291 aa)) folds into the PPM-type phosphatase domain. Mn(2+) is bound by residues D148, G149, D344, and D388. A nucleoside 3',5'-cyclic phosphate is bound by residues 491–616 (LFRK…RSVD) and 617–758 (LLSR…RHSS). In terms of domain architecture, Protein kinase spans 785–1038 (TTCLSTTDCS…PESIKKHPWF (254 aa)). Residues 791–799 (TDCSEIGLV) and K811 contribute to the ATP site.

This sequence in the N-terminal section; belongs to the PP2C family. In the C-terminal section; belongs to the protein kinase superfamily. AGC Ser/Thr protein kinase family. Mg(2+) serves as cofactor. Requires Mn(2+) as cofactor.

The catalysed reaction is O-phospho-L-seryl-[protein] + H2O = L-seryl-[protein] + phosphate. The enzyme catalyses O-phospho-L-threonyl-[protein] + H2O = L-threonyl-[protein] + phosphate. In Arabidopsis thaliana (Mouse-ear cress), this protein is Protein phosphatase 2C and cyclic nucleotide-binding/kinase domain-containing protein.